The primary structure comprises 301 residues: Tetrahydromethanopterin S-methyltransferase subunit E (301 aa).

Helical transmembrane passes span 85–105, 130–150, 151–171, 232–252, and 258–278; these read VIFAIAIGALVASAVHGTYCI, HTPVMMGYAFITTFCILVVSY, IMVAVLAHPFPLTLLAFIWGI, PVTGLAFGMTVFLSGWVTAVF, and LTMGWLSVAAGVILVLLLIIW.

This sequence belongs to the MtrE family. As to quaternary structure, the complex is composed of 8 subunits; MtrA, MtrB, MtrC, MtrD, MtrE, MtrF, MtrG and MtrH.

It localises to the cell membrane. The catalysed reaction is 5-methyl-5,6,7,8-tetrahydromethanopterin + coenzyme M + 2 Na(+)(in) = 5,6,7,8-tetrahydromethanopterin + methyl-coenzyme M + 2 Na(+)(out). Part of a complex that catalyzes the formation of methyl-coenzyme M and tetrahydromethanopterin from coenzyme M and methyl-tetrahydromethanopterin. This is an energy-conserving, sodium-ion translocating step. The protein is Tetrahydromethanopterin S-methyltransferase subunit E of Methanococcoides burtonii (strain DSM 6242 / NBRC 107633 / OCM 468 / ACE-M).